A 398-amino-acid chain; its full sequence is Enolase (398 aa).

Glutamine 154 contributes to the (2R)-2-phosphoglycerate binding site. The Proton donor role is filled by glutamate 196. Residues aspartate 232, glutamate 273, and aspartate 300 each contribute to the Mg(2+) site. The (2R)-2-phosphoglycerate site is built by lysine 325, arginine 354, serine 355, and lysine 376. Lysine 325 acts as the Proton acceptor in catalysis.

The protein belongs to the enolase family. Mg(2+) serves as cofactor.

It is found in the cytoplasm. Its subcellular location is the secreted. The protein resides in the cell surface. It carries out the reaction (2R)-2-phosphoglycerate = phosphoenolpyruvate + H2O. The protein operates within carbohydrate degradation; glycolysis; pyruvate from D-glyceraldehyde 3-phosphate: step 4/5. In terms of biological role, catalyzes the reversible conversion of 2-phosphoglycerate (2-PG) into phosphoenolpyruvate (PEP). It is essential for the degradation of carbohydrates via glycolysis. The chain is Enolase from Halobacterium salinarum (strain ATCC 700922 / JCM 11081 / NRC-1) (Halobacterium halobium).